Here is an 838-residue protein sequence, read N- to C-terminus: G-protein coupled receptor-associated sorting protein 2 (838 aa).

Disordered regions lie at residues 1–121 (MTGA…PGAR), 218–293 (ASNE…NPFS), and 531–552 (LELS…PSPE). Residues 13 to 31 (KPEKKAGEEVVAGPEREND) show a composition bias toward basic and acidic residues. Over residues 220 to 235 (NESGFWSADETSTASS) the composition is skewed to polar residues. The segment covering 255 to 271 (RSRHRAKHQTNPRSRPR) has biased composition (basic residues). S282 and S284 each carry phosphoserine. Residues 542–552 (SLLQPDQPSPE) show a composition bias toward polar residues.

Belongs to the GPRASP family. As to quaternary structure, interacts with cytoplasmic tails of a variety of G protein-coupled receptors such as muscarinic acetylcholine receptor M1/CHRM1 and calcitonin receptor/CALCR.

In terms of biological role, may play a role in regulation of a variety of G-protein coupled receptors. The sequence is that of G-protein coupled receptor-associated sorting protein 2 (GPRASP2) from Pongo abelii (Sumatran orangutan).